Consider the following 582-residue polypeptide: Phosphoglucomutase, cytoplasmic (582 aa).

Positions 25 and 124 each coordinate alpha-D-glucose 1,6-bisphosphate. The Phosphoserine intermediate role is filled by Ser124. Residues Ser124, Asp300, Asp302, and Asp304 each contribute to the Mg(2+) site. Ser124 carries the phosphoserine modification. Residues Asp304, Arg305, Thr368, Glu387, Ser389, and Lys400 each contribute to the alpha-D-glucose 1,6-bisphosphate site.

The protein belongs to the phosphohexose mutase family. Monomer. The cofactor is Mg(2+).

It localises to the cytoplasm. The catalysed reaction is alpha-D-glucose 1-phosphate = alpha-D-glucose 6-phosphate. The enzyme catalyses O-phospho-L-seryl-[protein] + alpha-D-glucose 1-phosphate = alpha-D-glucose 1,6-bisphosphate + L-seryl-[protein]. It carries out the reaction alpha-D-glucose 1,6-bisphosphate + L-seryl-[protein] = O-phospho-L-seryl-[protein] + alpha-D-glucose 6-phosphate. In terms of biological role, catalyzes the reversible isomerization of alpha-D-glucose 1-phosphate to alpha-D-glucose 6-phosphate. The mechanism proceeds via the intermediate compound alpha-D-glucose 1,6-bisphosphate. This enzyme participates in both the breakdown and synthesis of glucose. This Pisum sativum (Garden pea) protein is Phosphoglucomutase, cytoplasmic (PGM1).